The chain runs to 341 residues: ATPase GET3 (341 aa).

ATP is bound at residue 34–41 (KGGVGKTT). Residue Asp63 is part of the active site. ATP contacts are provided by Glu245 and Asn272. 2 residues coordinate Zn(2+): Cys283 and Cys286.

It belongs to the arsA ATPase family. In terms of assembly, homodimer.

The protein resides in the cytoplasm. It localises to the endoplasmic reticulum. ATPase required for the post-translational delivery of tail-anchored (TA) proteins to the endoplasmic reticulum. Recognizes and selectively binds the transmembrane domain of TA proteins in the cytosol. This complex then targets to the endoplasmic reticulum by membrane-bound receptors, where the tail-anchored protein is released for insertion. This process is regulated by ATP binding and hydrolysis. ATP binding drives the homodimer towards the closed dimer state, facilitating recognition of newly synthesized TA membrane proteins. ATP hydrolysis is required for insertion. Subsequently, the homodimer reverts towards the open dimer state, lowering its affinity for the membrane-bound receptor, and returning it to the cytosol to initiate a new round of targeting. In Paracoccidioides lutzii (strain ATCC MYA-826 / Pb01) (Paracoccidioides brasiliensis), this protein is ATPase GET3.